The following is a 95-amino-acid chain: Integration host factor subunit beta (95 aa).

It belongs to the bacterial histone-like protein family. In terms of assembly, heterodimer of an alpha and a beta chain.

This protein is one of the two subunits of integration host factor, a specific DNA-binding protein that functions in genetic recombination as well as in transcriptional and translational control. The chain is Integration host factor subunit beta from Psychromonas ingrahamii (strain DSM 17664 / CCUG 51855 / 37).